The chain runs to 1080 residues: DNA-directed RNA polymerase subunit beta (1080 aa).

It belongs to the RNA polymerase beta chain family. As to quaternary structure, in plastids the minimal PEP RNA polymerase catalytic core is composed of four subunits: alpha, beta, beta', and beta''. When a (nuclear-encoded) sigma factor is associated with the core the holoenzyme is formed, which can initiate transcription.

It localises to the plastid. It is found in the chloroplast. It catalyses the reaction RNA(n) + a ribonucleoside 5'-triphosphate = RNA(n+1) + diphosphate. Its function is as follows. DNA-dependent RNA polymerase catalyzes the transcription of DNA into RNA using the four ribonucleoside triphosphates as substrates. This Mesostigma viride (Green alga) protein is DNA-directed RNA polymerase subunit beta.